A 565-amino-acid chain; its full sequence is DNA mismatch repair protein MutL (565 aa).

Belongs to the DNA mismatch repair MutL/HexB family.

Its function is as follows. This protein is involved in the repair of mismatches in DNA. It is required for dam-dependent methyl-directed DNA mismatch repair. May act as a 'molecular matchmaker', a protein that promotes the formation of a stable complex between two or more DNA-binding proteins in an ATP-dependent manner without itself being part of a final effector complex. The polypeptide is DNA mismatch repair protein MutL (Desulforudis audaxviator (strain MP104C)).